Consider the following 708-residue polypeptide: Kelch-like protein 11 (708 aa).

The N-terminal stretch at 1–15 (MAAAAVAAAAAAAAA) is a signal peptide. Residues 47–70 (DFGPGPGISAMEASGGDPGPEAED) are disordered. The region spanning 94 to 170 (CDITLCFGGA…MYTGRIRVST (77 aa)) is the BTB domain. The BACK domain maps to 205 to 307 (CVAIHSLAHM…KPTYLTRHVK (103 aa)). Kelch repeat units follow at residues 360-407 (VIMV…VTES), 408-453 (YVYV…EVKG), 455-501 (LYSI…AIED), 503-556 (FVYI…VVNS), and 610-661 (DVFI…HVRI). Ser-465 is subject to Phosphoserine.

Component of a cullin-RING-based BCR (BTB-CUL3-RBX1) E3 ubiquitin-protein ligase complex. Homodimer. Interacts with CUL3.

Component of a cullin-RING-based BCR (BTB-CUL3-RBX1) E3 ubiquitin-protein ligase complex that mediates the ubiquitination of target proteins, leading most often to their proteasomal degradation. This chain is Kelch-like protein 11 (KLHL11), found in Homo sapiens (Human).